Here is a 397-residue protein sequence, read N- to C-terminus: Enoyl-[acyl-carrier-protein] reductase [NADH] (397 aa).

Residues 48–53, 74–75, 111–112, and 139–140 contribute to the NAD(+) site; these read GASTGY, FE, DA, and LA. Tyr-224 serves as a coordination point for substrate. Catalysis depends on Tyr-234, which acts as the Proton donor. Residues Lys-243 and 272–274 each bind NAD(+); that span reads VVT.

This sequence belongs to the TER reductase family. Monomer.

It catalyses the reaction a 2,3-saturated acyl-[ACP] + NAD(+) = a (2E)-enoyl-[ACP] + NADH + H(+). Its pathway is lipid metabolism; fatty acid biosynthesis. Functionally, involved in the final reduction of the elongation cycle of fatty acid synthesis (FAS II). Catalyzes the reduction of a carbon-carbon double bond in an enoyl moiety that is covalently linked to an acyl carrier protein (ACP). The protein is Enoyl-[acyl-carrier-protein] reductase [NADH] of Pseudomonas fluorescens (strain SBW25).